The following is a 254-amino-acid chain: Peroxisomal membrane protein 11-2 (254 aa).

The Cytoplasmic segment spans residues 1-113 (MVTAAGSPSS…YHPHPHVHPL (113 aa)). The chain crosses the membrane as a helical span at residues 114–134 (LVLLAYGGQGVYNFLEQFAWL). The Lumenal segment spans residues 135–227 (AKAGLLPARL…TVGDVTGRKG (93 aa)). Residues 228-247 (LLGSSTLMASAGLLSALISV) traverse the membrane as a helical segment. Topologically, residues 248-254 (HKNWNSC) are cytoplasmic.

It belongs to the peroxin-11 family.

It is found in the peroxisome membrane. Involved in peroxisomal proliferation. The sequence is that of Peroxisomal membrane protein 11-2 (PEX11-2) from Oryza sativa subsp. japonica (Rice).